We begin with the raw amino-acid sequence, 149 residues long: UPF0260 protein Pmen_1776 (149 aa).

The protein belongs to the UPF0260 family.

The polypeptide is UPF0260 protein Pmen_1776 (Ectopseudomonas mendocina (strain ymp) (Pseudomonas mendocina)).